The chain runs to 431 residues: Cyclin-B2-4 (431 aa).

The tract at residues 1 to 30 is disordered; it reads MGGSDENRHGVIGPMNRQQGGLRGGKVIPT.

The protein belongs to the cyclin family. Cyclin AB subfamily. In terms of assembly, interacts with SMR11.

The protein is Cyclin-B2-4 (CYCB2-4) of Arabidopsis thaliana (Mouse-ear cress).